The chain runs to 136 residues: MSIIKEFREFAMRGNVVDLAVGVIIGAAFGKIVSSLVADIIMPPLGLLIGGIDFKQFAVTLRDAQGDIPAVVMHYGVFIQNVFDFLIVAFAIFMAIKLINKLNRKKEEPAAAPAPTKEEVLLAEIRDLLKEQNNRS.

A run of 2 helical transmembrane segments spans residues 10-30 and 76-96; these read FAMR…AAFG and GVFI…FMAI.

It belongs to the MscL family. In terms of assembly, homopentamer.

It is found in the cell inner membrane. Functionally, channel that opens in response to stretch forces in the membrane lipid bilayer. May participate in the regulation of osmotic pressure changes within the cell. The protein is Large-conductance mechanosensitive channel of Shigella boydii serotype 18 (strain CDC 3083-94 / BS512).